Reading from the N-terminus, the 60-residue chain is VRDGYIRRKDEFKFKCYVDGKDCDDVCKSEGGSAGYCTALGFLCYCAGLPDDKAWKPTSS.

The LCN-type CS-alpha/beta domain occupies Arg2–Ser60. 3 cysteine pairs are disulfide-bonded: Cys16–Cys37, Cys23–Cys44, and Cys27–Cys46.

Belongs to the long (4 C-C) scorpion toxin superfamily. Sodium channel inhibitor family. Beta subfamily. Expressed by the venom gland.

Its subcellular location is the secreted. Its function is as follows. Depressant insect toxins cause a transient contraction paralysis followed by a slow flaccid paralysis. They bind voltage-independently to sodium channels (Nav) and block action potentials, primarily by depolarizing the axonal membrane and suppressing the sodium current. This is Putative insect toxin Acra6 from Androctonus crassicauda (Arabian fat-tailed scorpion).